Reading from the N-terminus, the 242-residue chain is DnaJ homolog subfamily B member 6 (242 aa).

In terms of domain architecture, J spans 2–69 (VDYYEVLGVQ…KKRDIYDRYG (68 aa)). Residues 2 to 146 (VDYYEVLGVQ…TGSFFSTFSG (145 aa)) are interaction with HSP70. Positions 119–242 (FEDFFGHRRG…KEQLLRLDNK (124 aa)) are interaction with KRT18. An Omega-N-methylarginine modification is found at arginine 135.

In terms of assembly, homooligomer. Interacts with BAG3, HSPB8 and STUB1. Interacts with ALKBH1. Interacts with HSP70, KRT18 and PTTG. As to expression, expressed in all tissues examined with highest expression in brain and retina and lower levels observed in testis, spleen, heart, liver and kidney.

It localises to the cytoplasm. It is found in the perinuclear region. The protein localises to the nucleus. The protein resides in the myofibril. Its subcellular location is the sarcomere. It localises to the z line. Has a stimulatory effect on the ATPase activity of HSP70 in a dose-dependent and time-dependent manner and hence acts as a co-chaperone of HSP70. Plays an indispensable role in the organization of KRT8/KRT18 filaments. Acts as an endogenous molecular chaperone for neuronal proteins including huntingtin. Suppresses aggregation and toxicity of polyglutamine-containing, aggregation-prone proteins. Also reduces cellular toxicity and caspase-3 activity. The polypeptide is DnaJ homolog subfamily B member 6 (DNAJB6) (Bos taurus (Bovine)).